A 394-amino-acid polypeptide reads, in one-letter code: Elongation factor Tu (394 aa).

One can recognise a tr-type G domain in the interval 10 to 205 (KPHMNVGTIG…TMDNYFDLPQ (196 aa)). Positions 19–26 (GHVDHGKT) are G1. Position 19–26 (19–26 (GHVDHGKT)) interacts with GTP. Threonine 26 is a Mg(2+) binding site. The segment at 61–65 (GITIN) is G2. Residues 82-85 (DCPG) are G3. GTP-binding positions include 82 to 86 (DCPGH) and 137 to 140 (NKLD). Residues 137–140 (NKLD) form a G4 region. The tract at residues 173-175 (SAF) is G5.

Belongs to the TRAFAC class translation factor GTPase superfamily. Classic translation factor GTPase family. EF-Tu/EF-1A subfamily. Monomer.

It is found in the cytoplasm. The catalysed reaction is GTP + H2O = GDP + phosphate + H(+). GTP hydrolase that promotes the GTP-dependent binding of aminoacyl-tRNA to the A-site of ribosomes during protein biosynthesis. This chain is Elongation factor Tu, found in Borrelia turicatae (strain 91E135).